The chain runs to 309 residues: DnaJ-like protein MG002 homolog (309 aa).

Positions 1–66 constitute a J domain; the sequence is MTLYDLLELP…KAEYDAMLRF (66 aa).

The polypeptide is DnaJ-like protein MG002 homolog (Mycoplasma pneumoniae (strain ATCC 29342 / M129 / Subtype 1) (Mycoplasmoides pneumoniae)).